Reading from the N-terminus, the 577-residue chain is Arginine--tRNA ligase (577 aa).

The 'HIGH' region motif lies at 122–132 (PNVAKEMHVGH).

This sequence belongs to the class-I aminoacyl-tRNA synthetase family. In terms of assembly, monomer.

It is found in the cytoplasm. It catalyses the reaction tRNA(Arg) + L-arginine + ATP = L-arginyl-tRNA(Arg) + AMP + diphosphate. The polypeptide is Arginine--tRNA ligase (Escherichia coli O157:H7 (strain EC4115 / EHEC)).